The primary structure comprises 525 residues: GMP synthase [glutamine-hydrolyzing] (525 aa).

The Glutamine amidotransferase type-1 domain occupies 9 to 207 (RILILDFGSQ…VRDICQCEAL (199 aa)). Catalysis depends on Cys-86, which acts as the Nucleophile. Active-site residues include His-181 and Glu-183. Positions 208–400 (WTPAKIIDDA…LGLPYDMLYR (193 aa)) constitute a GMPS ATP-PPase domain. 235–241 (SGGVDSS) is a binding site for ATP.

Homodimer.

It carries out the reaction XMP + L-glutamine + ATP + H2O = GMP + L-glutamate + AMP + diphosphate + 2 H(+). The protein operates within purine metabolism; GMP biosynthesis; GMP from XMP (L-Gln route): step 1/1. In terms of biological role, catalyzes the synthesis of GMP from XMP. This is GMP synthase [glutamine-hydrolyzing] from Escherichia coli (strain K12 / MC4100 / BW2952).